The sequence spans 614 residues: UvrABC system protein C (614 aa).

Positions 16 to 94 constitute a GIY-YIG domain; the sequence is SRPGVYRMFG…VKSLKPRFNV (79 aa). Positions 204 to 239 constitute a UVR domain; sequence GELQKRLASEMEAASEAMEFETAARLRDRIRAIAHV.

This sequence belongs to the UvrC family. As to quaternary structure, interacts with UvrB in an incision complex.

It is found in the cytoplasm. The UvrABC repair system catalyzes the recognition and processing of DNA lesions. UvrC both incises the 5' and 3' sides of the lesion. The N-terminal half is responsible for the 3' incision and the C-terminal half is responsible for the 5' incision. This chain is UvrABC system protein C, found in Hyphomonas neptunium (strain ATCC 15444).